A 555-amino-acid chain; its full sequence is MIWVAVVITMLLFILVAKPTGIYLEKAFQGSKKLDKVFGPFEKLIFKITGVKEYNQTWKQYALSLVLLNGFMIVVVYFIFRLQGVLPLNPAHIEGMEPTLAFNTAISFMADTNLQHYSGENGLSYLSQLIGITFLMFAAPATTLALVMAFIRGLAGKELGNFFVDFTRALTRVFLPIAFIAALVFVALGVPQTLDGAVTAQTIDGAKQSILRGPVASFISIKELGNNGGGFFGANSTHPFENPGQMSNILQMMLMMLLPTALPFTYGRMVGNKKQGRILFVSLFMVFLLGFITITTSELHGNPALNGMGIEHVQGSTEGKEVRFGTVFSSLYATVTTAAETGAVNTMHDTLTPIGGLVPLVNMMLNTVYGGVGAGFVNIIMYAIIAVFISGLMVGRTPEFLGKKIEGKEMKLIAVTILFHPLLILGFSALALSTSLGTDAISHSGFHGLTQVVYEYTSSAANNGSGFEGLADNTPFWNITTGLVMFLGRYFSLITMLAVAASLKEKTVVPETVGTFRTDNSLFGGIFIGTIVIVGALTFFPMLVLGPIAEFLTLK.

A run of 10 helical transmembrane segments spans residues 2-22 (IWVA…PTGI), 60-80 (QYAL…YFIF), 130-150 (IGIT…VMAF), 173-193 (VFLP…VPQT), 246-266 (MSNI…PFTY), 278-298 (ILFV…TTSE), 374-394 (AGFV…GLMV), 412-432 (LIAV…ALAL), 483-503 (LVMF…AASL), and 525-545 (GIFI…MLVL).

It belongs to the KdpA family. In terms of assembly, the system is composed of three essential subunits: KdpA, KdpB and KdpC.

It is found in the cell membrane. Functionally, part of the high-affinity ATP-driven potassium transport (or Kdp) system, which catalyzes the hydrolysis of ATP coupled with the electrogenic transport of potassium into the cytoplasm. This subunit binds the extracellular potassium ions and delivers the ions to the membrane domain of KdpB through an intramembrane tunnel. The chain is Potassium-transporting ATPase potassium-binding subunit from Bacillus cereus (strain 03BB102).